The chain runs to 312 residues: Methionyl-tRNA formyltransferase (312 aa).

112–115 (SLLP) lines the (6S)-5,6,7,8-tetrahydrofolate pocket.

It belongs to the Fmt family.

The enzyme catalyses L-methionyl-tRNA(fMet) + (6R)-10-formyltetrahydrofolate = N-formyl-L-methionyl-tRNA(fMet) + (6S)-5,6,7,8-tetrahydrofolate + H(+). Attaches a formyl group to the free amino group of methionyl-tRNA(fMet). The formyl group appears to play a dual role in the initiator identity of N-formylmethionyl-tRNA by promoting its recognition by IF2 and preventing the misappropriation of this tRNA by the elongation apparatus. This is Methionyl-tRNA formyltransferase from Dehalococcoides mccartyi (strain CBDB1).